The following is a 242-amino-acid chain: Protein Thf1 (242 aa).

Residues 178-209 (SSDKLQKDLDLYRSNLDKMQQLLTVIEDTLEA) are a coiled coil. The interval 212–242 (KKRASQKLEKKPEVVEEKEHKENEEQQQSSN) is disordered. The segment covering 217 to 235 (QKLEKKPEVVEEKEHKENE) has biased composition (basic and acidic residues).

This sequence belongs to the THF1 family.

Functionally, may be involved in photosynthetic membrane biogenesis. This chain is Protein Thf1, found in Crocosphaera subtropica (strain ATCC 51142 / BH68) (Cyanothece sp. (strain ATCC 51142)).